Reading from the N-terminus, the 86-residue chain is Small ribosomal subunit protein uS15 (86 aa).

Polar residues predominate over residues 1–10; sequence MSIDTQSIIE. The interval 1 to 21 is disordered; sequence MSIDTQSIIENNKRSAHDTGS.

This sequence belongs to the universal ribosomal protein uS15 family. Part of the 30S ribosomal subunit. Forms a bridge to the 50S subunit in the 70S ribosome, contacting the 23S rRNA.

In terms of biological role, one of the primary rRNA binding proteins, it binds directly to 16S rRNA where it helps nucleate assembly of the platform of the 30S subunit by binding and bridging several RNA helices of the 16S rRNA. Forms an intersubunit bridge (bridge B4) with the 23S rRNA of the 50S subunit in the ribosome. The chain is Small ribosomal subunit protein uS15 from Xylella fastidiosa (strain 9a5c).